Here is a 268-residue protein sequence, read N- to C-terminus: Undecaprenyl-diphosphatase (268 aa).

8 helical membrane passes run 11–33, 46–66, 84–104, 107–127, 144–164, 185–205, 213–233, and 246–266; these read FLGL…LLLI, FEVL…SAKL, LGVL…HGFI, VLFE…FILL, YPLP…IPGV, AEFS…YDLF, FNDG…GVFV, and FALF…ALII.

The protein belongs to the UppP family.

It localises to the cell inner membrane. The catalysed reaction is di-trans,octa-cis-undecaprenyl diphosphate + H2O = di-trans,octa-cis-undecaprenyl phosphate + phosphate + H(+). Functionally, catalyzes the dephosphorylation of undecaprenyl diphosphate (UPP). Confers resistance to bacitracin. This is Undecaprenyl-diphosphatase from Brucella suis (strain ATCC 23445 / NCTC 10510).